A 254-amino-acid chain; its full sequence is Cobalt transport protein CbiM (254 aa).

Residues 1–31 form the signal peptide; the sequence is MKTILRPFTLLSRSIFLALFVLFLWSPDAHA. Helical transmembrane passes span 37–57, 74–94, 106–126, 128–148, 169–189, and 212–232; these read GFLP…FLVV, LLLA…IPSV, LGAV…VLLF, ALLL…SMAI, WLAV…VTSL, and IFAL…VMVF.

This sequence belongs to the CbiM family. As to quaternary structure, forms an energy-coupling factor (ECF) transporter complex composed of an ATP-binding protein (A component, CbiO), a transmembrane protein (T component, CbiQ) and 2 possible substrate-capture proteins (S components, CbiM and CbiN) of unknown stoichimetry.

The protein resides in the cell inner membrane. It functions in the pathway cofactor biosynthesis; adenosylcobalamin biosynthesis. In terms of biological role, part of the energy-coupling factor (ECF) transporter complex CbiMNOQ involved in cobalt import. The chain is Cobalt transport protein CbiM from Chlorobium limicola (strain DSM 245 / NBRC 103803 / 6330).